The primary structure comprises 88 residues: Putative regulatory protein Ava_1474 (88 aa).

Belongs to the RemA family.

The polypeptide is Putative regulatory protein Ava_1474 (Trichormus variabilis (strain ATCC 29413 / PCC 7937) (Anabaena variabilis)).